The sequence spans 2098 residues: Non-reducing polyketide synthase crz7 (2098 aa).

One can recognise a Starter acyltransferase (SAT) domain in the interval 8–243 (ILFGDQTVDP…IKLPITAAFH (236 aa)). Residues 364–789 (SSDIAIIGFA…GGNTSLLLED (426 aa)) form the Ketosynthase family 3 (KS3) domain. Catalysis depends on for beta-ketoacyl synthase activity residues Cys532, His667, and His706. In terms of domain architecture, Malonyl-CoA:ACP transacylase (MAT) spans 887–1211 (IFLFTGQGSQ…IANAYNSGVK (325 aa)). The tract at residues 1270–1404 (TCLQGVENET…CTVMYGDGQQ (135 aa)) is N-terminal hotdog fold. The PKS/mFAS DH domain occupies 1270-1578 (TCLQGVENET…FQQMKRTTLQ (309 aa)). Residue His1305 is the Proton acceptor; for dehydratase activity of the active site. A C-terminal hotdog fold region spans residues 1431-1578 (IHRMLKEMIY…FQQMKRTTLQ (148 aa)). Asp1491 acts as the Proton donor; for dehydratase activity in catalysis. The Carrier 1 domain occupies 1613–1690 (QSPSAGFSKV…ELRAFFLDKM (78 aa)). An O-(pantetheine 4'-phosphoryl)serine modification is found at Ser1650. The segment at 1693-1725 (PQATANDDDSDDSSEDEDPGYSRSQSNSTISTP) is disordered. The segment covering 1698–1711 (NDDDSDDSSEDEDP) has biased composition (acidic residues). Over residues 1714–1724 (SRSQSNSTIST) the composition is skewed to polar residues. In terms of domain architecture, Carrier 2 spans 1725–1802 (PEEPDVVSIL…DVQKALGPTS (78 aa)). Ser1762 carries the post-translational modification O-(pantetheine 4'-phosphoryl)serine. The interval 1844–2080 (LFLLPDGAGS…VSGNHFSIMF (237 aa)) is thioesterase (TE) domain.

The cofactor is pantetheine 4'-phosphate.

It participates in secondary metabolite biosynthesis. Its function is as follows. Non-reducing polyketide synthase; part of the gene cluster that mediates the biosynthesis of the red pigment cristazarin, a naphthazarin derivative. The polyketide product of crz7 is likely 2-acetyl-1,3,6,8-tetrahydoxynaphthalene (AT4HN) from which a probable biosynthetic route of cristazarin can be deduced. The presence of two O-methyltransferases (crz1 and crz2), an enoyl reductase (crz5), an oxidase (crz8), and a short-chain dehydrogenase (crz9) encoded in the cristazarin biosynthetic cluster is consistent with methylation of a hydroxyl group, addition of two hydroxyl groups to the naphthalene core ring, and reduction of the acetyl side chain. In Cladonia metacorallifera (Lichen-forming fungus), this protein is Non-reducing polyketide synthase crz7.